A 209-amino-acid chain; its full sequence is Ubiquitin-conjugating enzyme E2 S (209 aa).

The UBC core domain maps to 14 to 160 (QTIRQVMREL…ARMMTEIHAQ (147 aa)). Catalysis depends on Cys-98, which acts as the Glycyl thioester intermediate. Positions 164–209 (CAAGAAGDSKDDDGPSTKKHAGLDKKLQDKKKEKLLKEKKRMLKRL) are disordered. Basic and acidic residues predominate over residues 171-199 (DSKDDDGPSTKKHAGLDKKLQDKKKEKLL). Residues 200–209 (KEKKRMLKRL) show a composition bias toward basic residues.

This sequence belongs to the ubiquitin-conjugating enzyme family.

The enzyme catalyses S-ubiquitinyl-[E1 ubiquitin-activating enzyme]-L-cysteine + [E2 ubiquitin-conjugating enzyme]-L-cysteine = [E1 ubiquitin-activating enzyme]-L-cysteine + S-ubiquitinyl-[E2 ubiquitin-conjugating enzyme]-L-cysteine.. Its pathway is protein modification; protein ubiquitination. Functionally, catalyzes the covalent attachment of ubiquitin to other proteins. Acts as an essential factor of the anaphase promoting complex/cyclosome (APC/C), a cell cycle-regulated ubiquitin ligase that controls progression through mitosis. Acts by specifically elongating polyubiquitin chains initiated by the E2 enzyme vih/UbcH10 on APC/C substrates, enhancing the degradation of APC/C substrates by the proteasome and promoting mitotic exit. The sequence is that of Ubiquitin-conjugating enzyme E2 S from Drosophila ananassae (Fruit fly).